Consider the following 622-residue polypeptide: Coiled-coil domain-containing protein 17 (622 aa).

Coiled coils occupy residues 81 to 102, 146 to 207, and 294 to 320; these read RSAL…QEMR, ARRV…LEVL, and GELP…RGRA. Disordered stretches follow at residues 334 to 356 and 584 to 622; these read SLQP…PLPP and PAVG…PVSF. A compositionally biased stretch (pro residues) spans 344–356; that stretch reads PLLPPPVAPPLPP. Residues 593–615 are compositionally biased toward basic and acidic residues; sequence PRTEEPLSGVKDRDEGLGPHHSS.

The protein is Coiled-coil domain-containing protein 17 (CCDC17) of Homo sapiens (Human).